The following is a 388-amino-acid chain: CUE domain-containing protein 1 (388 aa).

A compositionally biased stretch (low complexity) spans 1-10 (MTSLFRRSSS). The interval 1–45 (MTSLFRRSSSGSGGGGATGARGAGTGAGDGSTAPQELNNSRPARQ) is disordered. Positions 11–29 (GSGGGGATGARGAGTGAGD) are enriched in gly residues. The 44-residue stretch at 50–93 (EFNQAMDDFKTMFPNMDYDIIECVLRANSGAVDATIDQLLQMNL) folds into the CUE domain. Disordered stretches follow at residues 152-178 (PTPP…WNPP), 196-225 (DSIQ…ACDQ), 270-302 (SQKS…TVSE), and 369-388 (DFRG…REGQ). Polar residues predominate over residues 290-300 (VPGTSETNPTV).

This Mus musculus (Mouse) protein is CUE domain-containing protein 1 (Cuedc1).